We begin with the raw amino-acid sequence, 242 residues long: Leucyl/phenylalanyl-tRNA--protein transferase (242 aa).

The protein belongs to the L/F-transferase family.

The protein resides in the cytoplasm. It carries out the reaction N-terminal L-lysyl-[protein] + L-leucyl-tRNA(Leu) = N-terminal L-leucyl-L-lysyl-[protein] + tRNA(Leu) + H(+). The enzyme catalyses N-terminal L-arginyl-[protein] + L-leucyl-tRNA(Leu) = N-terminal L-leucyl-L-arginyl-[protein] + tRNA(Leu) + H(+). The catalysed reaction is L-phenylalanyl-tRNA(Phe) + an N-terminal L-alpha-aminoacyl-[protein] = an N-terminal L-phenylalanyl-L-alpha-aminoacyl-[protein] + tRNA(Phe). Functions in the N-end rule pathway of protein degradation where it conjugates Leu, Phe and, less efficiently, Met from aminoacyl-tRNAs to the N-termini of proteins containing an N-terminal arginine or lysine. The protein is Leucyl/phenylalanyl-tRNA--protein transferase of Alcanivorax borkumensis (strain ATCC 700651 / DSM 11573 / NCIMB 13689 / SK2).